A 532-amino-acid chain; its full sequence is Egg peptide speract receptor (532 aa).

Positions Met-1 to Ala-30 are cleaved as a signal peptide. Residues Glu-31–Pro-491 lie on the Extracellular side of the membrane. 4 consecutive SRCR domains span residues Ile-43–Leu-144, Leu-153–Lys-257, Ile-264–Ala-366, and Val-382–Glu-485. 12 cysteine pairs are disulfide-bonded: Cys-68/Cys-133, Cys-81/Cys-143, Cys-112/Cys-122, Cys-178/Cys-244, Cys-191/Cys-256, Cys-223/Cys-233, Cys-289/Cys-355, Cys-302/Cys-365, Cys-335/Cys-345, Cys-406/Cys-475, Cys-419/Cys-484, and Cys-454/Cys-465. Residues Asn-78 and Asn-115 are each glycosylated (N-linked (GlcNAc...) asparagine). Asn-459 is a glycosylation site (N-linked (GlcNAc...) asparagine). A helical transmembrane segment spans residues Ser-492–Ile-520. Over Lys-521–Ala-532 the chain is Cytoplasmic.

It is found in the membrane. In terms of biological role, receptor for the egg peptide speract. This Strongylocentrotus purpuratus (Purple sea urchin) protein is Egg peptide speract receptor.